Consider the following 203-residue polypeptide: Imidazole glycerol phosphate synthase subunit HisH 1 (203 aa).

Positions 1 to 203 (MIAIIDYNAG…KMIENFVELI (203 aa)) constitute a Glutamine amidotransferase type-1 domain. Cys-82 acts as the Nucleophile in catalysis. Catalysis depends on residues His-184 and Glu-186.

In terms of assembly, heterodimer of HisH and HisF.

The protein resides in the cytoplasm. It catalyses the reaction 5-[(5-phospho-1-deoxy-D-ribulos-1-ylimino)methylamino]-1-(5-phospho-beta-D-ribosyl)imidazole-4-carboxamide + L-glutamine = D-erythro-1-(imidazol-4-yl)glycerol 3-phosphate + 5-amino-1-(5-phospho-beta-D-ribosyl)imidazole-4-carboxamide + L-glutamate + H(+). It carries out the reaction L-glutamine + H2O = L-glutamate + NH4(+). It functions in the pathway amino-acid biosynthesis; L-histidine biosynthesis; L-histidine from 5-phospho-alpha-D-ribose 1-diphosphate: step 5/9. Its function is as follows. IGPS catalyzes the conversion of PRFAR and glutamine to IGP, AICAR and glutamate. The HisH subunit provides the glutamine amidotransferase activity that produces the ammonia necessary to HisF for the synthesis of IGP and AICAR. The sequence is that of Imidazole glycerol phosphate synthase subunit HisH 1 (hisH1) from Methanococcus maripaludis (strain DSM 14266 / JCM 13030 / NBRC 101832 / S2 / LL).